The chain runs to 200 residues: BREX protein BrxB (200 aa).

It belongs to the BrxB family.

BREX systems (bacteriophage exclusion) provide immunity against bacteriophage. Part of a type 1 BREX system which protects against dsDNA phage. This system allows phage adsorption but prevents phage DNA replication, without degradation of the phage DNA. Methylation of bacterial DNA by PglX guides self/non-self discrimination. When the brxA-brxB-brxC-pglX-pglZ-brxL genes are transformed into a susceptible E.coli strain (BW25113) they confer very high resistance to infection by bacteriophage VR7 and VpaE1, about 100-fold protection against lambda, T5 and T7 and no protection against RNA phage Qbeta, ssDNA phage M13 or dSDNA phage T4 and VR5. Glycosylated phage DNA is not susceptible to BREX. The BREX system does not confer resistance to lysogenic lambda phage, i.e. prophage that are integrated into the chromosomal DNA and then induced to form phage. This chain is BREX protein BrxB, found in Escherichia coli O9:H4 (strain HS).